Reading from the N-terminus, the 148-residue chain is NADPH-dependent 7-cyano-7-deazaguanine reductase (148 aa).

The active-site Thioimide intermediate is C50. D57 acts as the Proton donor in catalysis. Substrate contacts are provided by residues 72-74 (VES) and 91-92 (HE).

It belongs to the GTP cyclohydrolase I family. QueF type 1 subfamily.

The protein resides in the cytoplasm. The catalysed reaction is 7-aminomethyl-7-carbaguanine + 2 NADP(+) = 7-cyano-7-deazaguanine + 2 NADPH + 3 H(+). It participates in tRNA modification; tRNA-queuosine biosynthesis. Catalyzes the NADPH-dependent reduction of 7-cyano-7-deazaguanine (preQ0) to 7-aminomethyl-7-deazaguanine (preQ1). The polypeptide is NADPH-dependent 7-cyano-7-deazaguanine reductase (Helicobacter pylori (strain G27)).